We begin with the raw amino-acid sequence, 364 residues long: Mannose-1-phosphate guanyltransferase (364 aa).

It belongs to the transferase hexapeptide repeat family.

Its subcellular location is the cytoplasm. It catalyses the reaction alpha-D-mannose 1-phosphate + GTP + H(+) = GDP-alpha-D-mannose + diphosphate. The protein operates within nucleotide-sugar biosynthesis; GDP-alpha-D-mannose biosynthesis; GDP-alpha-D-mannose from alpha-D-mannose 1-phosphate (GTP route): step 1/1. Functionally, involved in cell wall synthesis where it is required for glycosylation. Involved in cell cycle progression through cell-size checkpoint. This is Mannose-1-phosphate guanyltransferase (MPG1) from Cryptococcus neoformans var. neoformans serotype D (strain B-3501A) (Filobasidiella neoformans).